Here is a 307-residue protein sequence, read N- to C-terminus: Elongation factor Ts (307 aa).

The involved in Mg(2+) ion dislocation from EF-Tu stretch occupies residues 80-83; the sequence is TDFV.

It belongs to the EF-Ts family.

It localises to the cytoplasm. Functionally, associates with the EF-Tu.GDP complex and induces the exchange of GDP to GTP. It remains bound to the aminoacyl-tRNA.EF-Tu.GTP complex up to the GTP hydrolysis stage on the ribosome. This is Elongation factor Ts from Methylobacterium sp. (strain 4-46).